The primary structure comprises 347 residues: Heat-inducible transcription repressor HrcA (347 aa).

Belongs to the HrcA family.

Functionally, negative regulator of class I heat shock genes (grpE-dnaK-dnaJ and groELS operons). Prevents heat-shock induction of these operons. The polypeptide is Heat-inducible transcription repressor HrcA (Mycobacterium sp. (strain JLS)).